The primary structure comprises 500 residues: Carnosic acid synthase (500 aa).

Residues leucine 4 to proline 24 traverse the membrane as a helical segment. Position 443 (cysteine 443) interacts with heme.

The protein belongs to the cytochrome P450 family. Heme serves as cofactor. As to expression, mostly expressed in young leaves, particularly in glandular trichomes.

Its subcellular location is the membrane. The enzyme catalyses 11-hydroxyferruginol + 3 reduced [NADPH--hemoprotein reductase] + 3 O2 = carnosate + 3 oxidized [NADPH--hemoprotein reductase] + 4 H2O + 4 H(+). The catalysed reaction is miltiradiene + 2 reduced [NADPH--hemoprotein reductase] + 2 O2 = miltiradien-20-al + 2 oxidized [NADPH--hemoprotein reductase] + 3 H2O + 2 H(+). It carries out the reaction ferruginol + 3 reduced [NADPH--hemoprotein reductase] + 3 O2 = pisiferate + 3 oxidized [NADPH--hemoprotein reductase] + 4 H2O + 4 H(+). It functions in the pathway secondary metabolite biosynthesis; terpenoid biosynthesis. In terms of biological role, monooxygenase involved in the biosynthesis of carnosate, a potent antioxidant labdane-related diterpene natural product. Catalyzes the oxidation of 11-hydroxyferruginol to produce carnosate. Mediates the conversion of miltiradien into miltiradien-20-al. Also involved in the production of pisiferic acid and derivative products from ferruginol. The polypeptide is Carnosic acid synthase (Salvia fruticosa (Greek sage)).